Consider the following 408-residue polypeptide: FAD-dependent monooxygenase nscC (408 aa).

The N-terminal stretch at 1–20 (MASRLPILIIGAGISGLTTA) is a signal peptide. Residues Glu34 and Ala45 each contribute to the FAD site. Residues Asn91 and Asn103 are each glycosylated (N-linked (GlcNAc...) asparagine). Position 119 (Arg119) interacts with FAD. 2 N-linked (GlcNAc...) asparagine glycosylation sites follow: Asn170 and Asn231. FAD is bound by residues Asp328 and Gly341.

The protein belongs to the paxM FAD-dependent monooxygenase family. Requires FAD as cofactor.

It participates in secondary metabolite biosynthesis. FAD-dependent monooxygenase; part of the gene cluster that mediates the biosynthesis of neosartoricin, a prenylated anthracenone that exhibits T-cell antiproliferative activity, suggestive of a physiological role as an immunosuppressive agent. The non-reducing polyketide synthase nscA probably synthesizes and cyclizes the decaketide backbone. The hydrolase nscB then mediates the product release through hydrolysis followed by spontaneous decarboxylation. The prenyltransferase nscD catalyzes the addition of the dimethylallyl group to the aromatic C5. The FAD-dependent monooxygenase nscC is then responsible for the stereospecific hydroxylation at C2. There is no gene encoding O-acetyltransferase in the nsc gene cluster; thus, the last step of 2-O-acetylation leading to neosartoricin may be catalyzed by an unidentified O-acetyltransferase. This chain is FAD-dependent monooxygenase nscC, found in Aspergillus fumigatus (strain ATCC MYA-4609 / CBS 101355 / FGSC A1100 / Af293) (Neosartorya fumigata).